The primary structure comprises 620 residues: Chaperone protein HscA homolog (620 aa).

This sequence belongs to the heat shock protein 70 family.

Chaperone involved in the maturation of iron-sulfur cluster-containing proteins. Has a low intrinsic ATPase activity which is markedly stimulated by HscB. In Acinetobacter baumannii (strain SDF), this protein is Chaperone protein HscA homolog.